Here is a 1028-residue protein sequence, read N- to C-terminus: U2 snRNP-associated SURP motif-containing protein (1028 aa).

Disordered stretches follow at residues 1–111 and 141–272; these read MADK…EDEK and VNAA…DPST. Alanine 2 carries the N-acetylalanine modification. Residues 7 to 16 show a composition bias toward polar residues; that stretch reads GGSQKASSKT. The span at 45 to 54 shows a compositional bias: basic residues; sequence TRPKSPRKHN. Positions 55-64 are enriched in basic and acidic residues; it reads YRNESARESL. Serine 67 is subject to Phosphoserine. Lysine 80 participates in a covalent cross-link: Glycyl lysine isopeptide (Lys-Gly) (interchain with G-Cter in SUMO2). Residues 92–121 are a coiled coil; sequence AKRTLSKKEQEELKKKEDEKAAAEIYEEFL. Basic and acidic residues-rich tracts occupy residues 97 to 111 and 144 to 155; these read SKKEQEELKKKEDEK and AKEEHETDEKRG. Glycyl lysine isopeptide (Lys-Gly) (interchain with G-Cter in SUMO2) cross-links involve residues lysine 145 and lysine 168. The segment covering 169–178 has biased composition (polar residues); it reads NPPNQSSNER. Residues 186–222 are compositionally biased toward basic and acidic residues; the sequence is ETKKPPLKKGEKEKKKSNLELFKEELKQIQEERDERH. Residues 192-232 adopt a coiled-coil conformation; sequence LKKGEKEKKKSNLELFKEELKQIQEERDERHKTKGRLSRFE. Residue serine 202 is modified to Phosphoserine. Lysine 208 participates in a covalent cross-link: Glycyl lysine isopeptide (Lys-Gly) (interchain with G-Cter in SUMO2). Serine 236 is modified (phosphoserine). Residues 239–249 show a composition bias toward basic and acidic residues; that stretch reads DGQRRSMDAPS. Positions 273-354 constitute an RRM domain; sequence TNLYLGNINP…FEMKLGWGKA (82 aa). The SURP motif repeat unit spans residues 429–472; it reads LIHRMIEFVVREGPMFEAMIMNREINNPMFRFLFENQTPAHVYY. Serine 484 carries the phosphoserine modification. The CID domain maps to 533–678; the sequence is LKEEQRDKLE…KLQNIFLGLV (146 aa). Threonine 718 is subject to Phosphothreonine. Residues lysine 747 and lysine 748 each participate in a glycyl lysine isopeptide (Lys-Gly) (interchain with G-Cter in SUMO2) cross-link. Lysine 759 is subject to N6-acetyllysine; alternate. Lysine 759 is covalently cross-linked (Glycyl lysine isopeptide (Lys-Gly) (interchain with G-Cter in SUMO2); alternate). 2 disordered regions span residues 777 to 840 and 854 to 1028; these read KWEL…EEKR and QDEL…KNKH. A coiled-coil region spans residues 779-809; the sequence is ELFDQHEESEEEENQNQEEESEDEEDTQSSK. Residues 785-805 are compositionally biased toward acidic residues; it reads EESEEEENQNQEEESEDEEDT. 3 positions are modified to phosphoserine: serine 787, serine 799, and serine 810. Basic and acidic residues-rich tracts occupy residues 809–840 and 873–921; these read KSEEHHLYSNPIKEEMTESKFSKYSEMSEEKR and QVEH…TPTR. Glycyl lysine isopeptide (Lys-Gly) (interchain with G-Cter in SUMO2) cross-links involve residues lysine 821, lysine 828, and lysine 831. Residues 836-914 adopt a coiled-coil conformation; the sequence is SEEKRAKLRE…ESRSKDEKEK (79 aa). Threonine 930 is modified (phosphothreonine). A phosphoserine mark is found at serine 945 and serine 947. Residues 949 to 979 show a composition bias toward basic and acidic residues; that stretch reads KSERSERSERSHKESSRSRSSHKDSPRDVSK. The segment covering 990 to 1028 has biased composition (basic residues); sequence TPKRSRRSRSRSPKKSGKKSRSQSRSPHRSHKKSKKNKH.

The protein belongs to the splicing factor SR family. As to quaternary structure, interacts with ERBB4.

It is found in the nucleus. This is U2 snRNP-associated SURP motif-containing protein (U2SURP) from Pongo abelii (Sumatran orangutan).